Here is a 349-residue protein sequence, read N- to C-terminus: D-alanine--D-alanine ligase (349 aa).

Positions K132–D335 constitute an ATP-grasp domain. V162 to E217 lines the ATP pocket. Mg(2+) is bound by residues D289, E302, and N304.

Belongs to the D-alanine--D-alanine ligase family. Mg(2+) is required as a cofactor. Mn(2+) serves as cofactor.

Its subcellular location is the cytoplasm. The enzyme catalyses 2 D-alanine + ATP = D-alanyl-D-alanine + ADP + phosphate + H(+). It participates in cell wall biogenesis; peptidoglycan biosynthesis. Functionally, cell wall formation. This Lactococcus lactis subsp. lactis (strain IL1403) (Streptococcus lactis) protein is D-alanine--D-alanine ligase.